We begin with the raw amino-acid sequence, 88 residues long: MASKERVGVVIRNPQEKTVIVAVNNRVRHNKYSKIIIRTKKYQVHDHSHICKLGDEVKISEVKPISKTKRWIISEVLSSTVNPEKFGD.

The protein belongs to the universal ribosomal protein uS17 family. Part of the 30S ribosomal subunit.

It localises to the plastid. It is found in the cyanelle. One of the primary rRNA binding proteins, it binds specifically to the 5'-end of 16S ribosomal RNA. In Cyanophora paradoxa, this protein is Small ribosomal subunit protein uS17c (rps17).